The following is a 478-amino-acid chain: Putrescine oxidase (478 aa).

15–70 (RDVVVVGAGPAGLMAARTLVAAGRTVAVLEARDRVGGRTWSKTVDGAFLEIGGQWI) is an FAD binding site.

This sequence belongs to the flavin monoamine oxidase family. It depends on FAD as a cofactor.

The catalysed reaction is putrescine + O2 + H2O = 4-aminobutanal + H2O2 + NH4(+). In Kocuria rosea (Deinococcus erythromyxa), this protein is Putrescine oxidase (puo).